The chain runs to 955 residues: 2-oxoglutarate dehydrogenase E1 component (955 aa).

The protein belongs to the alpha-ketoglutarate dehydrogenase family. Homodimer. Part of the 2-oxoglutarate dehydrogenase (OGDH) complex composed of E1 (2-oxoglutarate dehydrogenase), E2 (dihydrolipoamide succinyltransferase) and E3 (dihydrolipoamide dehydrogenase); the complex contains multiple copies of the three enzymatic components (E1, E2 and E3). It depends on thiamine diphosphate as a cofactor.

The enzyme catalyses N(6)-[(R)-lipoyl]-L-lysyl-[protein] + 2-oxoglutarate + H(+) = N(6)-[(R)-S(8)-succinyldihydrolipoyl]-L-lysyl-[protein] + CO2. Its function is as follows. E1 component of the 2-oxoglutarate dehydrogenase (OGDH) complex which catalyzes the decarboxylation of 2-oxoglutarate, the first step in the conversion of 2-oxoglutarate to succinyl-CoA and CO(2). This is 2-oxoglutarate dehydrogenase E1 component from Bacillus anthracis (strain A0248).